A 1028-amino-acid polypeptide reads, in one-letter code: Contactin-3 (1028 aa).

Positions methionine 1–glycine 19 are cleaved as a signal peptide. Ig-like C2-type domains follow at residues proline 32–glutamine 117, glutamate 122–glycine 209, proline 227–threonine 313, proline 318–lysine 402, proline 408–threonine 497, and proline 499–isoleucine 593. Cystine bridges form between cysteine 50/cysteine 100, cysteine 144/cysteine 196, cysteine 249/cysteine 297, cysteine 339/cysteine 386, and cysteine 431/cysteine 479. N-linked (GlcNAc...) asparagine glycosylation is found at asparagine 65 and asparagine 193. N-linked (GlcNAc...) asparagine glycans are attached at residues asparagine 377, asparagine 468, and asparagine 489. Cysteines 521 and 577 form a disulfide. Fibronectin type-III domains are found at residues proline 600–alanine 698, alanine 703–glutamate 800, alanine 805–threonine 901, and proline 902–aspartate 998. The disordered stretch occupies residues glycine 684–arginine 714. Asparagine 765, asparagine 860, asparagine 895, asparagine 913, asparagine 931, and asparagine 956 each carry an N-linked (GlcNAc...) asparagine glycan. The GPI-anchor amidated serine moiety is linked to residue serine 1002. Residues threonine 1003–tryptophan 1028 constitute a propeptide, removed in mature form.

This sequence belongs to the immunoglobulin superfamily. Contactin family. Interacts with PTPRG. Specifically expressed in brain. Ectopically expressed in tumors expressing endogenous intracisternal A-type particles (IAPs).

The protein resides in the cell membrane. Its function is as follows. Contactins mediate cell surface interactions during nervous system development. Has some neurite outgrowth-promoting activity. The polypeptide is Contactin-3 (Cntn3) (Mus musculus (Mouse)).